Consider the following 395-residue polypeptide: S-adenosylmethionine synthase (395 aa).

Residue His15 coordinates ATP. Asp17 is a binding site for Mg(2+). Glu43 is a K(+) binding site. 2 residues coordinate L-methionine: Glu56 and Gln99. The segment at 99–109 is flexible loop; it reads QSPEIAQGVDR. ATP is bound by residues 164–166, 230–231, Asp239, 245–246, Ala262, and Lys266; these read DAK, RF, and RK. Asp239 lines the L-methionine pocket. Lys270 is an L-methionine binding site.

This sequence belongs to the AdoMet synthase family. In terms of assembly, homotetramer; dimer of dimers. Mg(2+) is required as a cofactor. It depends on K(+) as a cofactor.

It is found in the cytoplasm. It catalyses the reaction L-methionine + ATP + H2O = S-adenosyl-L-methionine + phosphate + diphosphate. It participates in amino-acid biosynthesis; S-adenosyl-L-methionine biosynthesis; S-adenosyl-L-methionine from L-methionine: step 1/1. In terms of biological role, catalyzes the formation of S-adenosylmethionine (AdoMet) from methionine and ATP. The overall synthetic reaction is composed of two sequential steps, AdoMet formation and the subsequent tripolyphosphate hydrolysis which occurs prior to release of AdoMet from the enzyme. This is S-adenosylmethionine synthase from Colwellia psychrerythraea (strain 34H / ATCC BAA-681) (Vibrio psychroerythus).